Consider the following 380-residue polypeptide: MYG1 exonuclease (380 aa).

A mitochondrion-targeting transit peptide spans 1 to 46 (MGRRFLRGILTLPLRSVLQAQHRMLGSEQDPPAKRPRNNLMAPPRI). Lys266 and Lys272 each carry N6-acetyllysine.

This sequence belongs to the MYG1 family. Ubiquitously expressed, with highest levels in testis.

The protein resides in the nucleus. It localises to the nucleoplasm. The protein localises to the mitochondrion matrix. It is found in the nucleolus. Functionally, 3'-5' RNA exonuclease which cleaves in situ on specific transcripts in both nucleus and mitochondrion. Involved in regulating spatially segregated organellar RNA processing, acts as a coordinator of nucleo-mitochondrial crosstalk. In nucleolus, processes pre-ribosomal RNA involved in ribosome assembly and alters cytoplasmic translation. In mitochondrial matrix, processes 3'-termini of the mito-ribosomal and messenger RNAs and controls translation of mitochondrial proteins. The sequence is that of MYG1 exonuclease from Mus musculus (Mouse).